We begin with the raw amino-acid sequence, 466 residues long: 3-isopropylmalate dehydratase large subunit (466 aa).

The [4Fe-4S] cluster site is built by C347, C407, and C410.

Belongs to the aconitase/IPM isomerase family. LeuC type 1 subfamily. Heterodimer of LeuC and LeuD. [4Fe-4S] cluster serves as cofactor.

The enzyme catalyses (2R,3S)-3-isopropylmalate = (2S)-2-isopropylmalate. It functions in the pathway amino-acid biosynthesis; L-leucine biosynthesis; L-leucine from 3-methyl-2-oxobutanoate: step 2/4. Its function is as follows. Catalyzes the isomerization between 2-isopropylmalate and 3-isopropylmalate, via the formation of 2-isopropylmaleate. This is 3-isopropylmalate dehydratase large subunit from Shigella sonnei (strain Ss046).